We begin with the raw amino-acid sequence, 534 residues long: H(+)/hexose cotransporter 1 (534 aa).

Topologically, residues 1 to 21 (MAGGGVVVVSGRGLSTGDYRG) are cytoplasmic. A helical membrane pass occupies residues 22–42 (GLTVYVVMVAFMAACGGLLLG). Over 43 to 87 (YDNGVTGGVVSLEAFEKKFFPDVWAKKQEVHEDSPYCTYDNAKLQ) the chain is Extracellular. Residues 88–108 (LFVSSLFLAGLVSCLFASWIT) traverse the membrane as a helical segment. Residues 109 to 114 (RNWGRK) are Cytoplasmic-facing. Residues 115 to 135 (VTMGIGGAFFVAGGLVNAFAQ) form a helical membrane-spanning segment. The Extracellular segment spans residues 136–144 (DMAMLIVGR). Residues 145 to 165 (VLLGFGVGLGSQVVPQYLSEV) form a helical membrane-spanning segment. Over 166 to 173 (APFSHRGM) the chain is Cytoplasmic. A helical membrane pass occupies residues 174–194 (LNIGYQLFVTIGILIAGLVNY). Over 195-204 (AVRDWENGWR) the chain is Extracellular. A helical transmembrane segment spans residues 205–225 (LSLGPAAAPGAILFLGSLVLP). Residues 226–299 (ESPNFLVEKG…TSFVIQFFQQ (74 aa)) are Cytoplasmic-facing. Residues 300 to 322 (FTGINAIIFYVPVLFSSLGSANS) traverse the membrane as a helical segment. At 323-328 (AALLNT) the chain is on the extracellular side. Residues 329 to 349 (VVVGAVNVGSTLIAVMFSDKF) traverse the membrane as a helical segment. At 350–352 (GRR) the chain is on the cytoplasmic side. A helical transmembrane segment spans residues 353–373 (FLLIEGGIQCCLAMLTTGVVL). Residues 374–387 (AIEFAKYGTDPLPK) are Extracellular-facing. A helical transmembrane segment spans residues 388-408 (AVASGILAVICIFISGFAWSW). Over 409-433 (GPMGWLIPSEIFTLETRPAGTAVAV) the chain is Cytoplasmic. A helical membrane pass occupies residues 434–454 (VGNFLFSFVIGQAFVSMLCAM). The Extracellular portion of the chain corresponds to 455–456 (EY). Residues 457–477 (GVFLFFAGWLVIMVLCAIFLL) traverse the membrane as a helical segment. Over 478–534 (PETKGVPIERVQALYARHWFWNRVMGPAAAEVIAEDEKRVAAASAIIKEEELSKAMK) the chain is Cytoplasmic.

Belongs to the major facilitator superfamily. Sugar transporter (TC 2.A.1.1) family.

Its subcellular location is the membrane. In terms of biological role, active uptake of hexoses. This chain is H(+)/hexose cotransporter 1 (HUP1), found in Parachlorella kessleri (Green alga).